A 437-amino-acid polypeptide reads, in one-letter code: O-acetyl-L-homoserine sulfhydrylase (437 aa).

The residue at position 216 (lysine 216) is an N6-(pyridoxal phosphate)lysine.

Belongs to the trans-sulfuration enzymes family. In terms of assembly, homohexamer. Pyridoxal 5'-phosphate is required as a cofactor.

The catalysed reaction is O-acetyl-L-homoserine + hydrogen sulfide = L-homocysteine + acetate. It carries out the reaction O-acetyl-L-homoserine + methanethiol = L-methionine + acetate + H(+). It participates in amino-acid biosynthesis; L-methionine biosynthesis via de novo pathway; L-homocysteine from O-acetyl-L-homoserine: step 1/1. Inhibited by methionine and cystathionine. Catalyzes the conversion of O-acetyl-L-homoserine (OAH) into homocysteine in the methionine biosynthesis pathway. Can also use dimethyldisulfide and methanethiol as reduced sulfur sources, leading to the direct formation of methionine. Has weak cystathionine gamma-synthase activity. The chain is O-acetyl-L-homoserine sulfhydrylase from Corynebacterium glutamicum (strain ATCC 13032 / DSM 20300 / JCM 1318 / BCRC 11384 / CCUG 27702 / LMG 3730 / NBRC 12168 / NCIMB 10025 / NRRL B-2784 / 534).